Consider the following 45-residue polypeptide: Large ribosomal subunit protein bL34 (45 aa).

Belongs to the bacterial ribosomal protein bL34 family.

The chain is Large ribosomal subunit protein bL34 from Streptomyces avermitilis (strain ATCC 31267 / DSM 46492 / JCM 5070 / NBRC 14893 / NCIMB 12804 / NRRL 8165 / MA-4680).